We begin with the raw amino-acid sequence, 316 residues long: 2,3-dihydroxyphenylpropionate/2,3-dihydroxicinnamic acid 1,2-dioxygenase (316 aa).

His115 (proton donor) is an active-site residue. Residue His179 is the Proton acceptor of the active site.

Belongs to the LigB/MhpB extradiol dioxygenase family. In terms of assembly, homotetramer. Fe(2+) serves as cofactor.

It carries out the reaction 3-(2,3-dihydroxyphenyl)propanoate + O2 = (2Z,4E)-2-hydroxy-6-oxonona-2,4-dienedioate + H(+). It catalyses the reaction (2E)-3-(2,3-dihydroxyphenyl)prop-2-enoate + O2 = (2Z,4E,7E)-2-hydroxy-6-oxonona-2,4,7-trienedioate + H(+). It functions in the pathway aromatic compound metabolism; 3-phenylpropanoate degradation. In terms of biological role, catalyzes the non-heme iron(II)-dependent oxidative cleavage of 2,3-dihydroxyphenylpropionic acid and 2,3-dihydroxicinnamic acid into 2-hydroxy-6-ketononadienedioate and 2-hydroxy-6-ketononatrienedioate, respectively. This Paraburkholderia xenovorans (strain LB400) protein is 2,3-dihydroxyphenylpropionate/2,3-dihydroxicinnamic acid 1,2-dioxygenase.